Reading from the N-terminus, the 372-residue chain is Delta-type opioid receptor (372 aa).

The Extracellular portion of the chain corresponds to 1–47 (MELVPSARAELQSSPLVNLSDAFPSAFPSAGANASGSPGARSASSLA). Residues Asn18 and Asn33 are each glycosylated (N-linked (GlcNAc...) asparagine). Residues 48 to 75 (LAIAITALYSAVCAVGLLGNVLVMFGIV) traverse the membrane as a helical segment. Residues 76–85 (RYTKLKTATN) lie on the Cytoplasmic side of the membrane. Residues 86 to 110 (IYIFNLALADALATSTLPFQSAKYL) form a helical membrane-spanning segment. Residues 111 to 122 (METWPFGELLCK) lie on the Extracellular side of the membrane. An intrachain disulfide couples Cys121 to Cys198. The chain crosses the membrane as a helical span at residues 123-144 (AVLSIDYYNMFTSIFTLTMMSV). Residues 145–163 (DRYIAVCHPVKALDFRTPA) lie on the Cytoplasmic side of the membrane. A helical membrane pass occupies residues 164 to 186 (KAKLINICIWVLASGVGVPIMVM). At 187–206 (AVTQPRDGAVVCMLQFPSPS) the chain is on the extracellular side. A helical transmembrane segment spans residues 207 to 238 (WYWDTVTKICVFLFAFVVPILIITVCYGLMLL). The Cytoplasmic segment spans residues 239–261 (RLRSVRLLSGSKEKDRSLRRITR). The chain crosses the membrane as a helical span at residues 262 to 284 (MVLVVVGAFVVCWAPIHIFVIVW). The Extracellular portion of the chain corresponds to 285 to 299 (TLVDINRRDPLVVAA). Residues 300–321 (LHLCIALGYANSSLNPVLYAFL) form a helical membrane-spanning segment. The Cytoplasmic segment spans residues 322–372 (DENFKRCFRQLCRTPCGRQEPGSLRRPRQATTRERVTACTPSDGPGGGAAA). The S-palmitoyl cysteine moiety is linked to residue Cys333. The tract at residues 340-372 (QEPGSLRRPRQATTRERVTACTPSDGPGGGAAA) is disordered.

The protein belongs to the G-protein coupled receptor 1 family. In terms of assembly, may form homooligomers. Forms a heterodimer with OPRM1. Interacts with GPRASP1. Interacts with RTP4; the interaction promotes cell surface localization of the OPRD1-OPRM1 heterodimer. Post-translationally, ubiquitinated. A basal ubiquitination seems not to be related to degradation. Ubiquitination is increased upon formation of OPRM1:OPRD1 oligomers leading to proteasomal degradation; the ubiquitination is diminished by RTP4. Brain, with high concentrations in the basal ganglia and limbic regions.

It is found in the cell membrane. In terms of biological role, G-protein coupled receptor that functions as a receptor for endogenous enkephalins and for a subset of other opioids. Ligand binding causes a conformation change that triggers signaling via guanine nucleotide-binding proteins (G proteins) and modulates the activity of down-stream effectors, such as adenylate cyclase. Signaling leads to the inhibition of adenylate cyclase activity. Inhibits neurotransmitter release by reducing calcium ion currents and increasing potassium ion conductance. Plays a role in the perception of pain and in opiate-mediated analgesia. Plays a role in developing analgesic tolerance to morphine. This Mus musculus (Mouse) protein is Delta-type opioid receptor (Oprd1).